We begin with the raw amino-acid sequence, 425 residues long: tRNA(Ile)-lysidine synthase (425 aa).

Residue 27-32 coordinates ATP; it reads SGGLDS.

This sequence belongs to the tRNA(Ile)-lysidine synthase family.

Its subcellular location is the cytoplasm. It catalyses the reaction cytidine(34) in tRNA(Ile2) + L-lysine + ATP = lysidine(34) in tRNA(Ile2) + AMP + diphosphate + H(+). Functionally, ligates lysine onto the cytidine present at position 34 of the AUA codon-specific tRNA(Ile) that contains the anticodon CAU, in an ATP-dependent manner. Cytidine is converted to lysidine, thus changing the amino acid specificity of the tRNA from methionine to isoleucine. This is tRNA(Ile)-lysidine synthase from Streptococcus pneumoniae (strain 70585).